We begin with the raw amino-acid sequence, 744 residues long: Probable ubiquitin carboxyl-terminal hydrolase MINDY-4 (744 aa).

Ser-143, Ser-220, and Ser-224 each carry phosphoserine. The interval 211–358 (GMMAGPVASS…QLVSDRTDDK (148 aa)) is disordered. Positions 265–277 (VPDSSSDSVSRSP) are enriched in low complexity. Over residues 290 to 299 (NVTSSSQGLS) the composition is skewed to polar residues. Ser-295 carries the phosphoserine modification. A compositionally biased stretch (basic and acidic residues) spans 300–310 (QRDRPRLRSVS). The active-site Nucleophile is Cys-443. His-664 acts as the Proton acceptor in catalysis.

Belongs to the MINDY deubiquitinase family. FAM188 subfamily.

The catalysed reaction is Thiol-dependent hydrolysis of ester, thioester, amide, peptide and isopeptide bonds formed by the C-terminal Gly of ubiquitin (a 76-residue protein attached to proteins as an intracellular targeting signal).. Its function is as follows. Probable hydrolase that can remove 'Lys-48'-linked conjugated ubiquitin from proteins. This Mus musculus (Mouse) protein is Probable ubiquitin carboxyl-terminal hydrolase MINDY-4 (Mindy4).